A 239-amino-acid chain; its full sequence is Prolactin-8A4 (239 aa).

The N-terminal stretch at 1 to 31 (MMKLALSQPPFSGTLLMLVVSILLLWEKAAS) is a signal peptide. 2 disulfide bridges follow: cysteine 35–cysteine 42 and cysteine 102–cysteine 215. Asparagine 211 and asparagine 218 each carry an N-linked (GlcNAc...) asparagine glycan. A disulfide bridge connects residues cysteine 232 and cysteine 239.

Belongs to the somatotropin/prolactin family. In terms of tissue distribution, placental basal zone cells.

It localises to the secreted. This chain is Prolactin-8A4 (Prl8a4), found in Rattus norvegicus (Rat).